The primary structure comprises 395 residues: MAKETFKREKPHVNIGTIGHVDHGKTTLTAAITDILSKKGLAQAKKYDEIDGAPEEKERGITINTAHVEYETANRHYAHVDCPGHADYVKNMITGAAQMDGAILVVAASDGPMPQTKEHILLAAQVGVPKMVVFLNKVDLVDDEELLELVEIEVREELTKRGFDGDNTPIIKGSATGALAGEEKWVKEIENLMDAVDSYIPLPPRPVDLPFLMSVEDVFSITGRGTVATGRIERGRIKVGEPVEIVGLQESPLNSTVTGVEMFRKLLDEGEAGDNAGLLLRGVEKTQIRRGMVIVKPGSITPHTDFKGEVYVLSKDEGGRHTPFFNKYRPQFYFRTTDVTGEVELNAGTEMVMPGDNTNLTVKLIQPIAMEKGLKFAIREGGRTVGAGQVTEILK.

Residues 10 to 205 (KPHVNIGTIG…VDSYIPLPPR (196 aa)) enclose the tr-type G domain. The segment at 19–26 (GHVDHGKT) is G1. Residue 19-26 (GHVDHGKT) participates in GTP binding. T26 serves as a coordination point for Mg(2+). The interval 60–64 (GITIN) is G2. A G3 region spans residues 81 to 84 (DCPG). GTP-binding positions include 81-85 (DCPGH) and 136-139 (NKVD). Positions 136–139 (NKVD) are G4. A G5 region spans residues 174–176 (SAT).

The protein belongs to the TRAFAC class translation factor GTPase superfamily. Classic translation factor GTPase family. EF-Tu/EF-1A subfamily. As to quaternary structure, monomer.

It is found in the cytoplasm. It catalyses the reaction GTP + H2O = GDP + phosphate + H(+). Its function is as follows. GTP hydrolase that promotes the GTP-dependent binding of aminoacyl-tRNA to the A-site of ribosomes during protein biosynthesis. The sequence is that of Elongation factor Tu from Terrimonas ferruginea (Flavobacterium ferrugineum).